The sequence spans 250 residues: 1-(5-phosphoribosyl)-5-[(5-phosphoribosylamino)methylideneamino] imidazole-4-carboxamide isomerase (250 aa).

The active-site Proton acceptor is the Asp-8. The active-site Proton donor is Asp-131.

This sequence belongs to the HisA/HisF family.

It localises to the cytoplasm. It carries out the reaction 1-(5-phospho-beta-D-ribosyl)-5-[(5-phospho-beta-D-ribosylamino)methylideneamino]imidazole-4-carboxamide = 5-[(5-phospho-1-deoxy-D-ribulos-1-ylimino)methylamino]-1-(5-phospho-beta-D-ribosyl)imidazole-4-carboxamide. It functions in the pathway amino-acid biosynthesis; L-histidine biosynthesis; L-histidine from 5-phospho-alpha-D-ribose 1-diphosphate: step 4/9. The sequence is that of 1-(5-phosphoribosyl)-5-[(5-phosphoribosylamino)methylideneamino] imidazole-4-carboxamide isomerase from Paraburkholderia xenovorans (strain LB400).